The sequence spans 851 residues: ATP-dependent DNA helicase DDX31 (851 aa).

The segment at 1 to 196 (MAPDLASQRH…STSDRNQEER (196 aa)) is disordered. Residues 230 to 259 (AAFHELGLHPHLISTINTVLKMSSMTSVQK) carry the Q motif motif. Residues 262–443 (IPVLLEGRDA…DISLHDPVSI (182 aa)) form the Helicase ATP-binding domain. 275 to 282 (SQTGSGKT) serves as a coordination point for ATP. A DEAD box motif is present at residues 388–391 (DEAD). The Helicase C-terminal domain occupies 480–659 (SLKQHVTVVP…VSEIKMEDIL (180 aa)). Disordered regions lie at residues 762–784 (KKRK…HSLA) and 804–851 (KQNA…SQKV). Arg828 bears the Omega-N-methylarginine mark. A compositionally biased stretch (basic and acidic residues) spans 841–851 (VQRDSKTSQKV).

This sequence belongs to the DEAD box helicase family. DDX31/DBP7 subfamily. As to quaternary structure, interacts with NPM1; this interaction prevents interaction between NPM1 and HDM2. In terms of tissue distribution, weakly or undetectably expressed in normal organs. Up-regulated in renal cell carcinoma.

Its subcellular location is the nucleus. The protein localises to the nucleolus. The enzyme catalyses ATP + H2O = ADP + phosphate + H(+). May have DNA helicase activity and RNA helicase activity. Probably have ssDNA and RNA dependent ATPase activity. Plays a role in ribosome biogenesis and TP53/p53 regulation through its interaction with NPM1. The chain is ATP-dependent DNA helicase DDX31 from Homo sapiens (Human).